We begin with the raw amino-acid sequence, 496 residues long: Aspartyl/glutamyl-tRNA(Asn/Gln) amidotransferase subunit B (496 aa).

It belongs to the GatB/GatE family. GatB subfamily. Heterotrimer of A, B and C subunits.

It carries out the reaction L-glutamyl-tRNA(Gln) + L-glutamine + ATP + H2O = L-glutaminyl-tRNA(Gln) + L-glutamate + ADP + phosphate + H(+). The enzyme catalyses L-aspartyl-tRNA(Asn) + L-glutamine + ATP + H2O = L-asparaginyl-tRNA(Asn) + L-glutamate + ADP + phosphate + 2 H(+). Allows the formation of correctly charged Asn-tRNA(Asn) or Gln-tRNA(Gln) through the transamidation of misacylated Asp-tRNA(Asn) or Glu-tRNA(Gln) in organisms which lack either or both of asparaginyl-tRNA or glutaminyl-tRNA synthetases. The reaction takes place in the presence of glutamine and ATP through an activated phospho-Asp-tRNA(Asn) or phospho-Glu-tRNA(Gln). The protein is Aspartyl/glutamyl-tRNA(Asn/Gln) amidotransferase subunit B of Prochlorococcus marinus (strain MIT 9303).